A 1196-amino-acid chain; its full sequence is uncharacterized protein (1196 aa).

Residues 27-47 traverse the membrane as a helical segment; sequence ILLLLGSFILLNVWINVVTLL. Disordered regions lie at residues 150–345, 367–402, 669–762, 775–806, 826–877, 960–1009, and 1168–1196; these read GGGE…PQAH, SSVP…ASAP, TQDS…QKNT, CLTQ…DSGI, QATD…QDSE, YRSS…GPYK, and KCEA…DIRM. Residues 157–177 are compositionally biased toward polar residues; it reads VTASKAQASLLSRPETSSQFP. 2 stretches are compositionally biased toward low complexity: residues 212–227 and 253–279; these read HSPT…HPWT and THSQ…TPAH. The span at 299–321 shows a compositional bias: polar residues; the sequence is HTSAQAQTHSPPHTPEYTHSQAH. Pro residues predominate over residues 391–402; the sequence is APTPAPVPASAP. Polar residues-rich tracts occupy residues 733–742, 750–762, 787–804, and 826–849; these read YLCQNPSPSQ, SGIT…QKNT, PFTQ…TQDS, and QATD…TGNV. The span at 962–971 shows a compositional bias: basic and acidic residues; it reads SSEHSQDSNL.

Its subcellular location is the membrane. This is an uncharacterized protein from Homo sapiens (Human).